The sequence spans 365 residues: Alanine racemase (365 aa).

Lys-35 acts as the Proton acceptor; specific for D-alanine in catalysis. Lys-35 bears the N6-(pyridoxal phosphate)lysine mark. Arg-130 contacts substrate. Tyr-256 serves as the catalytic Proton acceptor; specific for L-alanine. Substrate is bound at residue Met-304.

Belongs to the alanine racemase family. The cofactor is pyridoxal 5'-phosphate.

It catalyses the reaction L-alanine = D-alanine. It participates in amino-acid biosynthesis; D-alanine biosynthesis; D-alanine from L-alanine: step 1/1. Functionally, catalyzes the interconversion of L-alanine and D-alanine. May also act on other amino acids. This is Alanine racemase (alr) from Polaromonas naphthalenivorans (strain CJ2).